Here is a 91-residue protein sequence, read N- to C-terminus: Putative defensin-like protein 83 (91 aa).

The N-terminal stretch at M1–G27 is a signal peptide. 4 disulfides stabilise this stretch: C32–C71, C37–C57, C43–C69, and C47–C70.

This sequence belongs to the DEFL family.

The protein localises to the secreted. The sequence is that of Putative defensin-like protein 83 (LCR46) from Arabidopsis thaliana (Mouse-ear cress).